A 569-amino-acid polypeptide reads, in one-letter code: Urease subunit beta (569 aa).

In terms of domain architecture, Urease spans 131–569 (GGIDTHIHFI…VSLAQLFSIF (439 aa)). The Ni(2+) site is built by His136, His138, and Lys219. Residue Lys219 is modified to N6-carboxylysine. A substrate-binding site is contributed by His221. Residues His248 and His274 each contribute to the Ni(2+) site. The active-site Proton donor is the His322. Asp362 provides a ligand contact to Ni(2+).

Belongs to the metallo-dependent hydrolases superfamily. Urease alpha subunit family. As to quaternary structure, heterohexamer of 3 UreA (alpha) and 3 UreB (beta) subunits. Four heterohexamers assemble to form a 16 nm dodecameric complex. Requires Ni cation as cofactor. In terms of processing, carboxylation allows a single lysine to coordinate two nickel ions.

The protein resides in the cytoplasm. The catalysed reaction is urea + 2 H2O + H(+) = hydrogencarbonate + 2 NH4(+). Its pathway is nitrogen metabolism; urea degradation; CO(2) and NH(3) from urea (urease route): step 1/1. In terms of biological role, ammonia produced by ureolysis increases the gastric pH thereby providing an environment permissive for colonization of the stomach. The sequence is that of Urease subunit beta from Helicobacter pylori (strain J99 / ATCC 700824) (Campylobacter pylori J99).